Reading from the N-terminus, the 475-residue chain is Protein nucleotidyltransferase YdiU (475 aa).

ATP is bound by residues Gly-82, Gly-84, Arg-85, Lys-105, Asp-117, Gly-118, Arg-168, and Arg-175. Catalysis depends on Asp-240, which acts as the Proton acceptor. Positions 241 and 250 each coordinate Mg(2+). Asp-250 serves as a coordination point for ATP.

It belongs to the SELO family. It depends on Mg(2+) as a cofactor. Mn(2+) serves as cofactor.

The enzyme catalyses L-seryl-[protein] + ATP = 3-O-(5'-adenylyl)-L-seryl-[protein] + diphosphate. It carries out the reaction L-threonyl-[protein] + ATP = 3-O-(5'-adenylyl)-L-threonyl-[protein] + diphosphate. It catalyses the reaction L-tyrosyl-[protein] + ATP = O-(5'-adenylyl)-L-tyrosyl-[protein] + diphosphate. The catalysed reaction is L-histidyl-[protein] + UTP = N(tele)-(5'-uridylyl)-L-histidyl-[protein] + diphosphate. The enzyme catalyses L-seryl-[protein] + UTP = O-(5'-uridylyl)-L-seryl-[protein] + diphosphate. It carries out the reaction L-tyrosyl-[protein] + UTP = O-(5'-uridylyl)-L-tyrosyl-[protein] + diphosphate. Functionally, nucleotidyltransferase involved in the post-translational modification of proteins. It can catalyze the addition of adenosine monophosphate (AMP) or uridine monophosphate (UMP) to a protein, resulting in modifications known as AMPylation and UMPylation. The chain is Protein nucleotidyltransferase YdiU from Aeromonas salmonicida (strain A449).